A 287-amino-acid chain; its full sequence is Pantothenate synthetase (287 aa).

An ATP-binding site is contributed by 30-37 (MGALHEGH). The Proton donor role is filled by histidine 37. Glutamine 61 contributes to the (R)-pantoate binding site. Glutamine 61 serves as a coordination point for beta-alanine. Residue 147–150 (GEKD) coordinates ATP. Glutamine 153 lines the (R)-pantoate pocket. ATP is bound at residue 184 to 187 (MSSR).

It belongs to the pantothenate synthetase family. Homodimer.

It localises to the cytoplasm. The catalysed reaction is (R)-pantoate + beta-alanine + ATP = (R)-pantothenate + AMP + diphosphate + H(+). The protein operates within cofactor biosynthesis; (R)-pantothenate biosynthesis; (R)-pantothenate from (R)-pantoate and beta-alanine: step 1/1. Functionally, catalyzes the condensation of pantoate with beta-alanine in an ATP-dependent reaction via a pantoyl-adenylate intermediate. This is Pantothenate synthetase from Granulibacter bethesdensis (strain ATCC BAA-1260 / CGDNIH1).